We begin with the raw amino-acid sequence, 328 residues long: MPNYINYPSWLHPEVIQGIPITWYSLSYILIILISYKFIWYQIQSDNVDIKKEDYEIFMFSLVLGAILGGRLASTLVYDKSGIYYSNPWLILLPFDQHWNFTGFRGMAIHGGFLGAIIAPLITINTKLKNTNVQKYFLKLTDYGSIAFSSGYILGRLANFANAELYGRVMKGGIIFPNAEPFDTNIPGVKEFASSVGLEISPHDLLINLPRIPSQLIEGFFEGPVTFLLLWFLFKKIKKYDGFIFGVYVMLYAFFRFFIEYLREPDKELGFIITYKPITSLSEFSFLNISMGQILSLTLMLSGLIWIIVTKKIADKKIKNNTNLAYKN.

3 consecutive transmembrane segments (helical) span residues 15 to 35, 57 to 77, and 106 to 126; these read VIQG…ILIS, IFMF…STLV, and GMAI…TINT. Residue Arg-156 participates in a 1,2-diacyl-sn-glycero-3-phospho-(1'-sn-glycerol) binding. Helical transmembrane passes span 242–262 and 289–309; these read GFIF…IEYL and ISMG…WIIV.

The protein belongs to the Lgt family.

The protein resides in the cell inner membrane. The enzyme catalyses L-cysteinyl-[prolipoprotein] + a 1,2-diacyl-sn-glycero-3-phospho-(1'-sn-glycerol) = an S-1,2-diacyl-sn-glyceryl-L-cysteinyl-[prolipoprotein] + sn-glycerol 1-phosphate + H(+). Its pathway is protein modification; lipoprotein biosynthesis (diacylglyceryl transfer). Functionally, catalyzes the transfer of the diacylglyceryl group from phosphatidylglycerol to the sulfhydryl group of the N-terminal cysteine of a prolipoprotein, the first step in the formation of mature lipoproteins. In Borreliella burgdorferi (strain ZS7) (Borrelia burgdorferi), this protein is Phosphatidylglycerol--prolipoprotein diacylglyceryl transferase.